The chain runs to 21 residues: 23S rRNA methylase leader peptide (21 aa).

Involved in erythromycin resistance. The protein is 23S rRNA methylase leader peptide of Corynebacterium diphtheriae.